The following is an 820-amino-acid chain: DNA gyrase subunit A (820 aa).

Positions 31-496 (IPDVRDGLKP…TLTNIEIEDL (466 aa)) constitute a Topo IIA-type catalytic domain. Tyrosine 119 serves as the catalytic O-(5'-phospho-DNA)-tyrosine intermediate. A GyrA-box motif is present at residues 523 to 529 (QRRGGKG).

This sequence belongs to the type II topoisomerase GyrA/ParC subunit family. Heterotetramer, composed of two GyrA and two GyrB chains. In the heterotetramer, GyrA contains the active site tyrosine that forms a transient covalent intermediate with DNA, while GyrB binds cofactors and catalyzes ATP hydrolysis.

Its subcellular location is the cytoplasm. It carries out the reaction ATP-dependent breakage, passage and rejoining of double-stranded DNA.. A type II topoisomerase that negatively supercoils closed circular double-stranded (ds) DNA in an ATP-dependent manner to modulate DNA topology and maintain chromosomes in an underwound state. Negative supercoiling favors strand separation, and DNA replication, transcription, recombination and repair, all of which involve strand separation. Also able to catalyze the interconversion of other topological isomers of dsDNA rings, including catenanes and knotted rings. Type II topoisomerases break and join 2 DNA strands simultaneously in an ATP-dependent manner. The polypeptide is DNA gyrase subunit A (Lawsonia intracellularis (strain PHE/MN1-00)).